Consider the following 64-residue polypeptide: Large ribosomal subunit protein bL32 (64 aa).

The disordered stretch occupies residues 1–35 (MAVQKSRVTPSRRGQRRSHDALTAKQLSTDPTSGE).

The protein belongs to the bacterial ribosomal protein bL32 family.

The polypeptide is Large ribosomal subunit protein bL32 (Xanthomonas axonopodis pv. citri (strain 306)).